A 469-amino-acid chain; its full sequence is Keratin, type II cytoskeletal 7 (469 aa).

Ser2 is modified (N-acetylserine). Ser2, Ser6, and Ser7 each carry phosphoserine. The head stretch occupies residues 2 to 90 (SIHFSSPVFT…DPSLQRVRQE (89 aa)). O-linked (GlcNAc) serine glycosylation occurs at Ser12. Arg20 carries the dimethylated arginine; alternate modification. Residue Arg20 is modified to Omega-N-methylarginine; alternate. Ser53, Ser71, and Ser83 each carry phosphoserine. Positions 90–126 (EEREQIKTLNNKFASFIDKVRFLEQQNKLLETKWTLL) are coil 1A. The 313-residue stretch at 91-403 (EREQIKTLNN…KLLEGEESRL (313 aa)) folds into the IF rod domain. Phosphothreonine is present on Thr97. Residues 127–144 (QEQKSAKSSRLPDIFEAQ) form a linker 1 region. Residue Lys130 forms a Glycyl lysine isopeptide (Lys-Gly) (interchain with G-Cter in SUMO2) linkage. Positions 145–236 (IAGLRGQLEA…TLNETELTEL (92 aa)) are coil 1B. N6-acetyllysine is present on Lys179. The interval 237–260 (QSQISDTSVVLSMDNSRSLDLDGI) is linker 12. Phosphoserine occurs at positions 252 and 254. The tract at residues 261–399 (IAEVKAQYEE…ATYRKLLEGE (139 aa)) is coil 2. Residues Lys265 and Lys286 each participate in a glycyl lysine isopeptide (Lys-Gly) (interchain with G-Cter in SUMO2) cross-link. The residue at position 289 (Thr289) is a Phosphothreonine. Glycyl lysine isopeptide (Lys-Gly) (interchain with G-Cter in SUMO2) cross-links involve residues Lys296 and Lys331. The interval 400 to 469 (ESRLAGDGVG…ASASRRSARN (70 aa)) is tail.

Belongs to the intermediate filament family. In terms of assembly, heterotetramer of two type I and two type II keratins. Interacts with eukaryotic translation initiator factor 3 (eIF3) subunit EIF3S10. Interacts with GPER1. Arg-20 is dimethylated, probably to asymmetric dimethylarginine.

Functionally, blocks interferon-dependent interphase and stimulates DNA synthesis in cells. This is Keratin, type II cytoskeletal 7 from Pan troglodytes (Chimpanzee).